The primary structure comprises 1578 residues: Chitinase ChiA (1578 aa).

An N-terminal signal peptide occupies residues 1–19; that stretch reads MKHYYRLLFLLLFPLLASA. Residues 25–466 enclose the GH18 1 domain; it reads KKVVGYYAQW…NQVDTSFGSV (442 aa). Positions 26 to 446 are GH18N; it reads KVVGYYAQWS…GGMIWELSQD (421 aa). Residues 92-93 and 119-122 each bind chitin; these read DA and GGWT. Glutamate 162 (proton donor) is an active-site residue. Chitin contacts are provided by residues tyrosine 163, 249–252, and tryptophan 441; that span reads FGYD. The CNA-B domain maps to 485-536; sequence TDVTVELRNASNAVIQTVVSANGNFAFNNLTSGQNYSLTALKATYTFTPVTL. The tract at residues 1142–1462 is GH18C; it reads KIILGYAHSW…GLMTWSVNWD (321 aa). In terms of domain architecture, GH18 2 spans 1142–1483; the sequence is KIILGYAHSW…KAYAAYFASQ (342 aa). Residue glutamate 1264 is the Proton donor of the active site. Residues 1473 to 1578 form a CTD region; the sequence is SKAYAAYFAS…KSFKVMNFLN (106 aa).

This sequence belongs to the glycosyl hydrolase 18 family. Chitinase class II subfamily.

The protein localises to the secreted. It catalyses the reaction Random endo-hydrolysis of N-acetyl-beta-D-glucosaminide (1-&gt;4)-beta-linkages in chitin and chitodextrins.. Functionally, major extracellular chitinase, which is essential for chitin utilization. The sequence is that of Chitinase ChiA (chiA) from Flavobacterium johnsoniae (strain ATCC 17061 / DSM 2064 / JCM 8514 / BCRC 14874 / CCUG 350202 / NBRC 14942 / NCIMB 11054 / UW101) (Cytophaga johnsonae).